We begin with the raw amino-acid sequence, 190 residues long: Threonylcarbamoyl-AMP synthase (190 aa).

The region spanning 7 to 190 is the YrdC-like domain; the sequence is LSSLIKCIRK…IVNGKLIRYV (184 aa).

Belongs to the SUA5 family. TsaC subfamily.

Its subcellular location is the cytoplasm. The enzyme catalyses L-threonine + hydrogencarbonate + ATP = L-threonylcarbamoyladenylate + diphosphate + H2O. In terms of biological role, required for the formation of a threonylcarbamoyl group on adenosine at position 37 (t(6)A37) in tRNAs that read codons beginning with adenine. Catalyzes the conversion of L-threonine, HCO(3)(-)/CO(2) and ATP to give threonylcarbamoyl-AMP (TC-AMP) as the acyladenylate intermediate, with the release of diphosphate. In Buchnera aphidicola subsp. Schizaphis graminum (strain Sg), this protein is Threonylcarbamoyl-AMP synthase.